Consider the following 133-residue polypeptide: Ribosome-binding factor A (133 aa).

Belongs to the RbfA family. As to quaternary structure, monomer. Binds 30S ribosomal subunits, but not 50S ribosomal subunits or 70S ribosomes.

The protein localises to the cytoplasm. Functionally, one of several proteins that assist in the late maturation steps of the functional core of the 30S ribosomal subunit. Associates with free 30S ribosomal subunits (but not with 30S subunits that are part of 70S ribosomes or polysomes). Required for efficient processing of 16S rRNA. May interact with the 5'-terminal helix region of 16S rRNA. The protein is Ribosome-binding factor A of Psychromonas ingrahamii (strain DSM 17664 / CCUG 51855 / 37).